The following is a 253-amino-acid chain: Imidazole glycerol phosphate synthase subunit HisF (253 aa).

Catalysis depends on residues Asp11 and Asp130.

It belongs to the HisA/HisF family. In terms of assembly, heterodimer of HisH and HisF.

It localises to the cytoplasm. It catalyses the reaction 5-[(5-phospho-1-deoxy-D-ribulos-1-ylimino)methylamino]-1-(5-phospho-beta-D-ribosyl)imidazole-4-carboxamide + L-glutamine = D-erythro-1-(imidazol-4-yl)glycerol 3-phosphate + 5-amino-1-(5-phospho-beta-D-ribosyl)imidazole-4-carboxamide + L-glutamate + H(+). It functions in the pathway amino-acid biosynthesis; L-histidine biosynthesis; L-histidine from 5-phospho-alpha-D-ribose 1-diphosphate: step 5/9. Its function is as follows. IGPS catalyzes the conversion of PRFAR and glutamine to IGP, AICAR and glutamate. The HisF subunit catalyzes the cyclization activity that produces IGP and AICAR from PRFAR using the ammonia provided by the HisH subunit. The chain is Imidazole glycerol phosphate synthase subunit HisF from Methylibium petroleiphilum (strain ATCC BAA-1232 / LMG 22953 / PM1).